The chain runs to 309 residues: NADH-quinone oxidoreductase subunit C (309 aa).

Residues 198-309 (LPGDEKAVPP…RTRKKKEDGE (112 aa)) form a disordered region. Over residues 220 to 230 (TKGDAKADVPK) the composition is skewed to basic and acidic residues. Residues 246 to 261 (DAAAKPVAEAAAPAAT) show a composition bias toward low complexity.

Belongs to the complex I 30 kDa subunit family. NDH-1 is composed of 14 different subunits. Subunits NuoB, C, D, E, F, and G constitute the peripheral sector of the complex.

The protein localises to the cell inner membrane. It catalyses the reaction a quinone + NADH + 5 H(+)(in) = a quinol + NAD(+) + 4 H(+)(out). In terms of biological role, NDH-1 shuttles electrons from NADH, via FMN and iron-sulfur (Fe-S) centers, to quinones in the respiratory chain. The immediate electron acceptor for the enzyme in this species is believed to be ubiquinone. Couples the redox reaction to proton translocation (for every two electrons transferred, four hydrogen ions are translocated across the cytoplasmic membrane), and thus conserves the redox energy in a proton gradient. The sequence is that of NADH-quinone oxidoreductase subunit C from Novosphingobium aromaticivorans (strain ATCC 700278 / DSM 12444 / CCUG 56034 / CIP 105152 / NBRC 16084 / F199).